Consider the following 252-residue polypeptide: MKVIFNADDFGLTQGVNQGIVKAHLDGVVKSTTLMVGMPAEQHAVQLAKQLPELKIGLHLRFTAGRPLTGERNLTDEHGVFTAYRDFWQRRDYQPEAIYHEAIAQVEHFLKLGLTLSHLDSHHHAHTHPQLAPIIYEVAKKYHVPLRDIGMAGEEAFGCRYHFTDFFYDQRLGIDPLMKHLLELKERFDLVEVMCHPAFVDPLLEKCSGYAKQREEELRILTSAQLIQLLVAHDIEITDYSALISAPLHSCV.

Residues H59 and H122 each contribute to the Mg(2+) site.

This sequence belongs to the YdjC deacetylase family. Homodimer. The cofactor is Mg(2+).

In terms of biological role, probably catalyzes the deacetylation of acetylated carbohydrates an important step in the degradation of oligosaccharides. This Vibrio cholerae serotype O1 (strain ATCC 39541 / Classical Ogawa 395 / O395) protein is Carbohydrate deacetylase.